Reading from the N-terminus, the 227-residue chain is Ribose-5-phosphate isomerase A (227 aa).

Residues 26–29, 82–85, and 95–98 each bind substrate; these read TGST, DGAD, and KGGG. Residue glutamate 104 is the Proton acceptor of the active site. Lysine 122 contributes to the substrate binding site.

The protein belongs to the ribose 5-phosphate isomerase family. In terms of assembly, homodimer.

The enzyme catalyses aldehydo-D-ribose 5-phosphate = D-ribulose 5-phosphate. The protein operates within carbohydrate degradation; pentose phosphate pathway; D-ribose 5-phosphate from D-ribulose 5-phosphate (non-oxidative stage): step 1/1. In terms of biological role, catalyzes the reversible conversion of ribose-5-phosphate to ribulose 5-phosphate. This is Ribose-5-phosphate isomerase A from Streptococcus pneumoniae serotype 4 (strain ATCC BAA-334 / TIGR4).